The primary structure comprises 340 residues: Methane monooxygenase component C (340 aa).

The 92-residue stretch at 1–92 folds into the 2Fe-2S ferredoxin-type domain; sequence MYQIVIETED…DLHLLVPYTY (92 aa). Residues C37, C41, C44, and C76 each coordinate [2Fe-2S] cluster. Residues 101-205 enclose the FAD-binding FR-type domain; the sequence is QTNWLAEILA…RGPAGSFFLH (105 aa). 215 to 229 serves as a coordination point for FAD; sequence VAGGTGLSPVLSMIR.

As to quaternary structure, the soluble methane monooxygenase (sMMO) consists of four components A/MMOH (composed of alpha/MmoX, beta/MmoY and gamma/MmoZ), B/MMOB (MmoB), C/MMOR (MmoC) and D/MMOD (MmoD). [2Fe-2S] cluster is required as a cofactor.

It carries out the reaction methane + NADH + O2 + H(+) = methanol + NAD(+) + H2O. The catalysed reaction is methane + NADPH + O2 + H(+) = methanol + NADP(+) + H2O. Its function is as follows. Responsible for the initial oxygenation of methane to methanol in methanotrophs. It also catalyzes the monohydroxylation of a variety of unactivated alkenes, alicyclic, aromatic and heterocyclic compounds. The component C is the iron-sulfur flavoprotein of sMMO. The polypeptide is Methane monooxygenase component C (mmoC) (Methylosinus trichosporium).